The following is a 132-amino-acid chain: Histone H2A.2 (132 aa).

Belongs to the histone H2A family. In terms of assembly, the nucleosome is a histone octamer containing two molecules each of H2A, H2B, H3 and H4 assembled in one H3-H4 heterotetramer and two H2A-H2B heterodimers. The octamer wraps approximately 147 bp of DNA.

Its subcellular location is the nucleus. The protein localises to the chromosome. In terms of biological role, core component of nucleosome. Nucleosomes wrap and compact DNA into chromatin, limiting DNA accessibility to the cellular machineries which require DNA as a template. Histones thereby play a central role in transcription regulation, DNA repair, DNA replication and chromosomal stability. DNA accessibility is regulated via a complex set of post-translational modifications of histones, also called histone code, and nucleosome remodeling. The chain is Histone H2A.2 from Leishmania infantum.